A 346-amino-acid polypeptide reads, in one-letter code: Holliday junction branch migration complex subunit RuvB (346 aa).

Residues 1–182 (MSEPARLISP…FGIPVRLSFY (182 aa)) form a large ATPase domain (RuvB-L) region. Residues L21, R22, G63, K66, T67, T68, 129 to 131 (EDF), R172, Y182, and R219 each bind ATP. T67 is a binding site for Mg(2+). The small ATPAse domain (RuvB-S) stretch occupies residues 183–253 (TVEELELIVR…IADEALTRLL (71 aa)). The interval 256 to 346 (NVGFDQLDKR…AQFRLFQEDN (91 aa)) is head domain (RuvB-H). R292, R311, and R316 together coordinate DNA.

The protein belongs to the RuvB family. In terms of assembly, homohexamer. Forms an RuvA(8)-RuvB(12)-Holliday junction (HJ) complex. HJ DNA is sandwiched between 2 RuvA tetramers; dsDNA enters through RuvA and exits via RuvB. An RuvB hexamer assembles on each DNA strand where it exits the tetramer. Each RuvB hexamer is contacted by two RuvA subunits (via domain III) on 2 adjacent RuvB subunits; this complex drives branch migration. In the full resolvosome a probable DNA-RuvA(4)-RuvB(12)-RuvC(2) complex forms which resolves the HJ.

Its subcellular location is the cytoplasm. The catalysed reaction is ATP + H2O = ADP + phosphate + H(+). Functionally, the RuvA-RuvB-RuvC complex processes Holliday junction (HJ) DNA during genetic recombination and DNA repair, while the RuvA-RuvB complex plays an important role in the rescue of blocked DNA replication forks via replication fork reversal (RFR). RuvA specifically binds to HJ cruciform DNA, conferring on it an open structure. The RuvB hexamer acts as an ATP-dependent pump, pulling dsDNA into and through the RuvAB complex. RuvB forms 2 homohexamers on either side of HJ DNA bound by 1 or 2 RuvA tetramers; 4 subunits per hexamer contact DNA at a time. Coordinated motions by a converter formed by DNA-disengaged RuvB subunits stimulates ATP hydrolysis and nucleotide exchange. Immobilization of the converter enables RuvB to convert the ATP-contained energy into a lever motion, pulling 2 nucleotides of DNA out of the RuvA tetramer per ATP hydrolyzed, thus driving DNA branch migration. The RuvB motors rotate together with the DNA substrate, which together with the progressing nucleotide cycle form the mechanistic basis for DNA recombination by continuous HJ branch migration. Branch migration allows RuvC to scan DNA until it finds its consensus sequence, where it cleaves and resolves cruciform DNA. The chain is Holliday junction branch migration complex subunit RuvB from Rhizobium johnstonii (strain DSM 114642 / LMG 32736 / 3841) (Rhizobium leguminosarum bv. viciae).